The chain runs to 194 residues: Molybdenum cofactor guanylyltransferase (194 aa).

GTP is bound by residues 12-14 (LAG), Lys-25, Asn-53, Asp-71, and Asp-101. Residue Asp-101 coordinates Mg(2+).

The protein belongs to the MobA family. In terms of assembly, monomer. It depends on Mg(2+) as a cofactor.

It localises to the cytoplasm. The catalysed reaction is Mo-molybdopterin + GTP + H(+) = Mo-molybdopterin guanine dinucleotide + diphosphate. In terms of biological role, transfers a GMP moiety from GTP to Mo-molybdopterin (Mo-MPT) cofactor (Moco or molybdenum cofactor) to form Mo-molybdopterin guanine dinucleotide (Mo-MGD) cofactor. This Escherichia coli O157:H7 protein is Molybdenum cofactor guanylyltransferase.